We begin with the raw amino-acid sequence, 166 residues long: MAFIDPAQLDLEDRVVAINRITKVVKGGRRLRFAALVVVGDHNGHVGFGTGKAQEVPEAIRKAVDAARKNLIEVPTVGTTLPHEVIGQYSGSRIMLKPAIAGSGVAAGGAVRAVMELAGIADVTSKSLGSNTPVNVVRATFDGLVNMKDAESVAKLRGVSVQHLAE.

The S5 DRBM domain maps to 11–74 (LEDRVVAINR…DAARKNLIEV (64 aa)).

This sequence belongs to the universal ribosomal protein uS5 family. Part of the 30S ribosomal subunit. Contacts proteins S4 and S8.

With S4 and S12 plays an important role in translational accuracy. In terms of biological role, located at the back of the 30S subunit body where it stabilizes the conformation of the head with respect to the body. The sequence is that of Small ribosomal subunit protein uS5 from Ligilactobacillus salivarius (strain UCC118) (Lactobacillus salivarius).